Reading from the N-terminus, the 640-residue chain is MACSTFSKPLKDKINPWGPLIILGILIRAGVSVQHDSPHKVFNVTWRVTNLMTGQTANATSLLGTMTDAFPKLYFDLCDLVGDYWDDPEPDIGDGCRTPGGRRRTRLYDFYVCPGHTVPIGCGGPGEGYCGKWGCETTGQAYWKPSSSWDLISLKRGNTPKDQGPCYDSSVSSDIKGATPGGRCNPLVLEFTDAGKKASWDGPKVWGLRLYRSTGTDPVTRFSLTRRVLNIGPRVPIGPNPVIIDQLPPSRPVQIMLPRPPQPPPPGAASIVPETAPPSQQPGTGDRLLNLVDGAYQALNLTSPDKTQECWLCLVAEPPYYEGVAVLGTYSNHTSAPTNCSVASQHKLTLSEVTGQGLCIGTVPKTHQALCNTTLKTNKGSYYLVAPAGTTWACNTGLTPCLSATVLNRTTDYCVLVELWPRVTYHPPSYVYSQFEKSYRHKREPVSLTLALLLGGLTMGGIAAGVGTGTTALVATQQFQQLHAAVQDDLKEVEKSITNLEKSLTSLSEVVLQNRRGLDLLFLKEGGLCAALKEECCFYADHTGLVRDSMAKLRERLTQRQKLFESSQGWFEGLFNRSPWFTTLISTIMGPLIILLLILLFGPCILNRLVQFVKDRISVVQALVLTQQYHQLKPLEYEPQ.

A signal peptide spans 1-32 (MACSTFSKPLKDKINPWGPLIILGILIRAGVS). Residues 32–236 (SVQHDSPHKV…RVLNIGPRVP (205 aa)) form a receptor-binding domain (RBD) region. At 33 to 584 (VQHDSPHKVF…FNRSPWFTTL (552 aa)) the chain is on the extracellular side. 2 N-linked (GlcNAc...) asparagine; by host glycosylation sites follow: Asn-43 and Asn-58. 2 disulfide bridges follow: Cys-113-Cys-130 and Cys-122-Cys-135. Residues 259-284 (RPPQPPPPGAASIVPETAPPSQQPGT) form a disordered region. The N-linked (GlcNAc...) asparagine; by host glycan is linked to Asn-300. 3 cysteine pairs are disulfide-bonded: Cys-310–Cys-313, Cys-310–Cys-537, and Cys-529–Cys-536. The CXXC signature appears at 310–313 (CWLC). Asn-332, Asn-339, Asn-372, and Asn-408 each carry an N-linked (GlcNAc...) asparagine; by host glycan. Residues 446 to 466 (VSLTLALLLGGLTMGGIAAGV) are fusion peptide. The stretch at 477-511 (QQFQQLHAAVQDDLKEVEKSITNLEKSLTSLSEVV) forms a coiled coil. The tract at residues 512-528 (LQNRRGLDLLFLKEGGL) is immunosuppression. The short motif at 529-537 (CAALKEECC) is the CX6CC element. The chain crosses the membrane as a helical span at residues 585 to 605 (ISTIMGPLIILLLILLFGPCI). Cys-604 carries S-palmitoyl cysteine; by host lipidation. Residues 606–640 (LNRLVQFVKDRISVVQALVLTQQYHQLKPLEYEPQ) are Cytoplasmic-facing. The YXXL motif; contains endocytosis signal signature appears at 629 to 632 (YHQL).

The mature envelope protein (Env) consists of a trimer of SU-TM heterodimers attached by a labile interchain disulfide bond. Post-translationally, specific enzymatic cleavages in vivo yield mature proteins. Envelope glycoproteins are synthesized as an inactive precursor that is N-glycosylated and processed likely by host cell furin or by a furin-like protease in the Golgi to yield the mature SU and TM proteins. The cleavage site between SU and TM requires the minimal sequence [KR]-X-[KR]-R. The R-peptide is released from the C-terminus of the cytoplasmic tail of the TM protein upon particle formation as a result of proteolytic cleavage by the viral protease. Cleavage of this peptide is required for TM to become fusogenic. The CXXC motif is highly conserved across a broad range of retroviral envelope proteins. It is thought to participate in the formation of a labile disulfide bond possibly with the CX6CC motif present in the transmembrane protein. Isomerization of the intersubunit disulfide bond to an SU intrachain disulfide bond is thought to occur upon receptor recognition in order to allow membrane fusion. In terms of processing, the transmembrane protein is palmitoylated. Post-translationally, the R-peptide is palmitoylated.

It localises to the virion membrane. Its subcellular location is the host cell membrane. The surface protein (SU) attaches the virus to the host cell by binding to its receptor. This interaction triggers the refolding of the transmembrane protein (TM) and is thought to activate its fusogenic potential by unmasking its fusion peptide. Fusion occurs at the host cell plasma membrane. In terms of biological role, the transmembrane protein (TM) acts as a class I viral fusion protein. Under the current model, the protein has at least 3 conformational states: pre-fusion native state, pre-hairpin intermediate state, and post-fusion hairpin state. During viral and target cell membrane fusion, the coiled coil regions (heptad repeats) assume a trimer-of-hairpins structure, positioning the fusion peptide in close proximity to the C-terminal region of the ectodomain. The formation of this structure appears to drive apposition and subsequent fusion of viral and target cell membranes. Membranes fusion leads to delivery of the nucleocapsid into the cytoplasm. The sequence is that of Envelope glycoprotein (env) from Rauscher mink cell focus-inducing virus.